The following is a 219-amino-acid chain: 2-hydroxy-3-keto-5-methylthiopentenyl-1-phosphate phosphatase (219 aa).

The protein belongs to the HAD-like hydrolase superfamily. MtnX family.

The enzyme catalyses 2-hydroxy-5-methylsulfanyl-3-oxopent-1-enyl phosphate + H2O = 1,2-dihydroxy-5-(methylsulfanyl)pent-1-en-3-one + phosphate. It participates in amino-acid biosynthesis; L-methionine biosynthesis via salvage pathway; L-methionine from S-methyl-5-thio-alpha-D-ribose 1-phosphate: step 4/6. Dephosphorylates 2-hydroxy-3-keto-5-methylthiopentenyl-1-phosphate (HK-MTPenyl-1-P) yielding 1,2-dihydroxy-3-keto-5-methylthiopentene (DHK-MTPene). The protein is 2-hydroxy-3-keto-5-methylthiopentenyl-1-phosphate phosphatase of Bacillus thuringiensis (strain Al Hakam).